The following is a 135-amino-acid chain: NADH-quinone oxidoreductase subunit K (135 aa).

Transmembrane regions (helical) follow at residues 33-53 (VLGLIPMSHGLILAGILFAIG), 63-83 (FLFMLMSLEIMMNAAALAFVV), and 95-115 (IMFIFILTLAAAEAAIGLAIL).

Belongs to the complex I subunit 4L family. As to quaternary structure, NDH-1 is composed of 14 different subunits. Subunits NuoA, H, J, K, L, M, N constitute the membrane sector of the complex.

The protein resides in the cell inner membrane. The catalysed reaction is a quinone + NADH + 5 H(+)(in) = a quinol + NAD(+) + 4 H(+)(out). In terms of biological role, NDH-1 shuttles electrons from NADH, via FMN and iron-sulfur (Fe-S) centers, to quinones in the respiratory chain. The immediate electron acceptor for the enzyme in this species is believed to be ubiquinone. Couples the redox reaction to proton translocation (for every two electrons transferred, four hydrogen ions are translocated across the cytoplasmic membrane), and thus conserves the redox energy in a proton gradient. In Psychrobacter arcticus (strain DSM 17307 / VKM B-2377 / 273-4), this protein is NADH-quinone oxidoreductase subunit K.